The chain runs to 28 residues: Omega-agatoxin-Aa2a (28 aa).

It belongs to the neurotoxin 04 (omega-agtx) family. 03 (type II/III omega-agtx) subfamily. As to expression, expressed by the venom gland.

Its subcellular location is the secreted. Functionally, omega-agatoxin are antagonist of voltage-gated calcium channels. They block insect neuromuscular transmission presynaptically. Potent blocker of N-type calcium channels (Cav2.2/CACNA1B). The sequence is that of Omega-agatoxin-Aa2a from Agelenopsis aperta (North American funnel-web spider).